Reading from the N-terminus, the 518-residue chain is Protein nucleotidyltransferase YdiU (518 aa).

ATP contacts are provided by Gly100, Gly102, Arg103, Lys123, Asp135, Gly136, Arg193, and Arg200. Asp270 functions as the Proton acceptor in the catalytic mechanism. The Mg(2+) site is built by Asn271 and Asp280. Asp280 is an ATP binding site.

Belongs to the SELO family. Mg(2+) is required as a cofactor. Mn(2+) serves as cofactor.

The catalysed reaction is L-seryl-[protein] + ATP = 3-O-(5'-adenylyl)-L-seryl-[protein] + diphosphate. It carries out the reaction L-threonyl-[protein] + ATP = 3-O-(5'-adenylyl)-L-threonyl-[protein] + diphosphate. The enzyme catalyses L-tyrosyl-[protein] + ATP = O-(5'-adenylyl)-L-tyrosyl-[protein] + diphosphate. It catalyses the reaction L-histidyl-[protein] + UTP = N(tele)-(5'-uridylyl)-L-histidyl-[protein] + diphosphate. The catalysed reaction is L-seryl-[protein] + UTP = O-(5'-uridylyl)-L-seryl-[protein] + diphosphate. It carries out the reaction L-tyrosyl-[protein] + UTP = O-(5'-uridylyl)-L-tyrosyl-[protein] + diphosphate. In terms of biological role, nucleotidyltransferase involved in the post-translational modification of proteins. It can catalyze the addition of adenosine monophosphate (AMP) or uridine monophosphate (UMP) to a protein, resulting in modifications known as AMPylation and UMPylation. The polypeptide is Protein nucleotidyltransferase YdiU (Xanthomonas oryzae pv. oryzae (strain PXO99A)).